The primary structure comprises 351 residues: Peptide chain release factor 1 (351 aa).

At Gln-233 the chain carries N5-methylglutamine.

This sequence belongs to the prokaryotic/mitochondrial release factor family. Methylated by PrmC. Methylation increases the termination efficiency of RF1.

The protein resides in the cytoplasm. In terms of biological role, peptide chain release factor 1 directs the termination of translation in response to the peptide chain termination codons UAG and UAA. The sequence is that of Peptide chain release factor 1 (prfA) from Treponema pallidum (strain Nichols).